The primary structure comprises 308 residues: Acetaldehyde dehydrogenase (308 aa).

25 to 28 serves as a coordination point for NAD(+); the sequence is TGAI. The active-site Acyl-thioester intermediate is the Cys-139. Position 279 (Asn-279) interacts with NAD(+).

Belongs to the acetaldehyde dehydrogenase family.

The catalysed reaction is acetaldehyde + NAD(+) + CoA = acetyl-CoA + NADH + H(+). The chain is Acetaldehyde dehydrogenase from Streptomyces griseus subsp. griseus (strain JCM 4626 / CBS 651.72 / NBRC 13350 / KCC S-0626 / ISP 5235).